Reading from the N-terminus, the 239-residue chain is Probable fimbrial chaperone YehC (239 aa).

A signal peptide spans 1-31 (MAAIPWRPFNLRGIKMKGLLSLLIFSMVLPA).

This sequence belongs to the periplasmic pilus chaperone family.

The protein localises to the periplasm. In terms of biological role, part of the yehABCD fimbrial operon. Could contribute to adhesion to various surfaces in specific environmental niches. The sequence is that of Probable fimbrial chaperone YehC (yehC) from Escherichia coli (strain K12).